We begin with the raw amino-acid sequence, 364 residues long: DNA replication and repair protein RecF (364 aa).

30 to 37 (GNNGQGKT) contributes to the ATP binding site.

Belongs to the RecF family.

The protein localises to the cytoplasm. In terms of biological role, the RecF protein is involved in DNA metabolism; it is required for DNA replication and normal SOS inducibility. RecF binds preferentially to single-stranded, linear DNA. It also seems to bind ATP. The sequence is that of DNA replication and repair protein RecF from Geotalea daltonii (strain DSM 22248 / JCM 15807 / FRC-32) (Geobacter daltonii).